We begin with the raw amino-acid sequence, 216 residues long: tRNA (guanine-N(7)-)-methyltransferase (216 aa).

4 residues coordinate S-adenosyl-L-methionine: Glu44, Glu69, Asn97, and Asp119. Asp119 is an active-site residue. Substrate is bound by residues Lys123, Asp155, and 192–195; that span reads TEYE.

Belongs to the class I-like SAM-binding methyltransferase superfamily. TrmB family.

It catalyses the reaction guanosine(46) in tRNA + S-adenosyl-L-methionine = N(7)-methylguanosine(46) in tRNA + S-adenosyl-L-homocysteine. The protein operates within tRNA modification; N(7)-methylguanine-tRNA biosynthesis. Its function is as follows. Catalyzes the formation of N(7)-methylguanine at position 46 (m7G46) in tRNA. The polypeptide is tRNA (guanine-N(7)-)-methyltransferase (Lysinibacillus sphaericus (strain C3-41)).